Reading from the N-terminus, the 2184-residue chain is Genome polyprotein (2184 aa).

Residue G2 is the site of N-myristoyl glycine; by host attachment. Residues 2 to 1494 (GAQVSTQKTG…HVSRAFICLQ (1493 aa)) are Cytoplasmic-facing. Residues 567–583 (FYQGDVQNAVEGAMVRV) are amphipathic alpha-helix. Catalysis depends on for protease 2A activity residues H871 and D889. The Zn(2+) site is built by C906 and C908. Catalysis depends on C960, which acts as the For protease 2A activity. The Zn(2+) site is built by C966 and H968. The membrane-binding stretch occupies residues 1100-1172 (NNGWLKKFTE…EQSAPSQGDQ (73 aa)). Residues 1100–1238 (NNGWLKKFTE…SPGAGKSVAT (139 aa)) form an oligomerization region. Residues 1121–1125 (AIKIQ) form an RNA-binding region. An SF3 helicase domain is found at 1204–1360 (EKKMSNYIQF…SMYSQNGKIN (157 aa)). C1368, C1380, and C1385 together coordinate Zn(2+). A C4-type; degenerate zinc finger spans residues 1368–1385 (CDEDCCPVNFKKCCPLVC). The interval 1412 to 1419 (EYNHRHSV) is RNA-binding. The segment at 1423-1428 (LEALFQ) is oligomerization. Residues 1495-1510 (ALTTFVSVAGIIYIIY) lie within the membrane without spanning it. At 1511 to 2184 (KLFAGFQGAY…TLRRKWLDSF (674 aa)) the chain is on the cytoplasmic side. Y1520 carries the post-translational modification O-(5'-phospho-RNA)-tyrosine. Residues 1540–1718 (GPAFEFAVAM…FSAALLRHYF (179 aa)) form the Peptidase C3 domain. Active-site for protease 3C activity residues include H1579, E1610, and C1686. The 117-residue stretch at 1949-2065 (GHLIAFDYSG…SYPWPIDASL (117 aa)) folds into the RdRp catalytic domain. 2 residues coordinate Mg(2+): D1955 and D2051.

The protein belongs to the picornaviruses polyprotein family. Interacts with capsid protein VP1 and capsid protein VP3 to form heterotrimeric protomers. As to quaternary structure, interacts with capsid protein VP0, and capsid protein VP3 to form heterotrimeric protomers. Five protomers subsequently associate to form pentamers which serve as building blocks for the capsid. Interacts with capsid protein VP2, capsid protein VP3 and capsid protein VP4 following cleavage of capsid protein VP0. In terms of assembly, interacts with capsid protein VP1 and capsid protein VP3 in the mature capsid. Interacts with capsid protein VP0 and capsid protein VP1 to form heterotrimeric protomers. Five protomers subsequently associate to form pentamers which serve as building blocks for the capsid. Interacts with capsid protein VP4 in the mature capsid. Interacts with protein 2C; this interaction may be important for virion morphogenesis. As to quaternary structure, interacts with capsid protein VP1 and capsid protein VP3. In terms of assembly, homodimer. Homohexamer; forms a hexameric ring structure with 6-fold symmetry characteristic of AAA+ ATPases. Interacts (via N-terminus) with host RTN3 (via reticulon domain); this interaction is important for viral replication. Interacts with capsid protein VP3; this interaction may be important for virion morphogenesis. As to quaternary structure, interacts with protein 3CD. In terms of assembly, homodimer. Interacts with host GBF1. Interacts (via GOLD domain) with host ACBD3 (via GOLD domain); this interaction allows the formation of a viral protein 3A/ACBD3 heterotetramer with a 2:2 stoichiometry, which will stimulate the recruitment of host PI4KB in order to synthesize PI4P at the viral RNA replication sites. Interacts with RNA-directed RNA polymerase. As to quaternary structure, interacts with protein 3AB and with RNA-directed RNA polymerase. In terms of assembly, interacts with Viral protein genome-linked and with protein 3CD. Mg(2+) serves as cofactor. In terms of processing, specific enzymatic cleavages in vivo by the viral proteases yield processing intermediates and the mature proteins. Post-translationally, myristoylation is required for the formation of pentamers during virus assembly. Further assembly of 12 pentamers and a molecule of genomic RNA generates the provirion. During virion maturation, immature virions are rendered infectious following cleavage of VP0 into VP4 and VP2. This maturation seems to be an autocatalytic event triggered by the presence of RNA in the capsid and it is followed by a conformational change infectious virion. In terms of processing, myristoylation is required during RNA encapsidation and formation of the mature virus particle. Post-translationally, VPg is uridylylated by the polymerase into VPg-pUpU. This acts as a nucleotide-peptide primer for the genomic RNA replication.

The protein localises to the virion. It is found in the host cytoplasm. It localises to the host cytoplasmic vesicle membrane. Its subcellular location is the host nucleus. The enzyme catalyses a ribonucleoside 5'-triphosphate + H2O = a ribonucleoside 5'-diphosphate + phosphate + H(+). It carries out the reaction Selective cleavage of Tyr-|-Gly bond in the picornavirus polyprotein.. The catalysed reaction is RNA(n) + a ribonucleoside 5'-triphosphate = RNA(n+1) + diphosphate. It catalyses the reaction Selective cleavage of Gln-|-Gly bond in the poliovirus polyprotein. In other picornavirus reactions Glu may be substituted for Gln, and Ser or Thr for Gly.. With respect to regulation, replication or transcription is subject to high level of random mutations by the nucleotide analog ribavirin. Forms an icosahedral capsid of pseudo T=3 symmetry with capsid proteins VP2 and VP3. The capsid is 300 Angstroms in diameter, composed of 60 copies of each capsid protein and enclosing the viral positive strand RNA genome. Capsid protein VP1 mainly forms the vertices of the capsid. Capsid protein VP1 interacts with host ITGA2/ITGB1 to provide virion attachment to target host cells. This attachment induces virion internalization predominantly through caveolin-mediated endocytosis. Tyrosine kinases are probably involved in the entry process. After binding to its receptor, the capsid undergoes conformational changes. Capsid protein VP1 N-terminus (that contains an amphipathic alpha-helix) and capsid protein VP4 are externalized. Together, they shape a pore in the host membrane through which viral genome is translocated to host cell cytoplasm. Functionally, forms an icosahedral capsid of pseudo T=3 symmetry with capsid proteins VP2 and VP3. The capsid is 300 Angstroms in diameter, composed of 60 copies of each capsid protein and enclosing the viral positive strand RNA genome. Its function is as follows. Lies on the inner surface of the capsid shell. After binding to the host receptor, the capsid undergoes conformational changes. Capsid protein VP4 is released, Capsid protein VP1 N-terminus is externalized, and together, they shape a pore in the host membrane through which the viral genome is translocated into the host cell cytoplasm. In terms of biological role, component of immature procapsids, which is cleaved into capsid proteins VP4 and VP2 after maturation. Allows the capsid to remain inactive before the maturation step. Cysteine protease that cleaves viral polyprotein and specific host proteins. It is responsible for the autocatalytic cleavage between the P1 and P2 regions, which is the first cleavage occurring in the polyprotein. Also cleaves the host translation initiation factor EIF4G1, in order to shut down the capped cellular mRNA translation. Inhibits the host nucleus-cytoplasm protein and RNA trafficking by cleaving host members of the nuclear pores. Counteracts stress granule formation probably by antagonizing its assembly or promoting its dissassembly. Functionally, plays an essential role in the virus replication cycle by acting as a viroporin. Creates a pore in the host endoplasmic reticulum and as a consequence releases Ca2+ in the cytoplasm of infected cell. In turn, high levels of cytoplasmic calcium may trigger membrane trafficking and transport of viral ER-associated proteins to viroplasms, sites of viral genome replication. Its function is as follows. Induces and associates with structural rearrangements of intracellular membranes. Displays RNA-binding, nucleotide binding and NTPase activities. May play a role in virion morphogenesis and viral RNA encapsidation by interacting with the capsid protein VP3. In terms of biological role, localizes the viral replication complex to the surface of membranous vesicles. Together with protein 3CD binds the Cis-Active RNA Element (CRE) which is involved in RNA synthesis initiation. Acts as a cofactor to stimulate the activity of 3D polymerase, maybe through a nucleid acid chaperone activity. Localizes the viral replication complex to the surface of membranous vesicles. It inhibits host cell endoplasmic reticulum-to-Golgi apparatus transport and causes the disassembly of the Golgi complex, possibly through GBF1 interaction. This would result in depletion of MHC, trail receptors and IFN receptors at the host cell surface. Plays an essential role in viral RNA replication by recruiting ACBD3 and PI4KB at the viral replication sites, thereby allowing the formation of the rearranged membranous structures where viral replication takes place. Functionally, acts as a primer for viral RNA replication and remains covalently bound to viral genomic RNA. VPg is uridylylated prior to priming replication into VPg-pUpU. The oriI viral genomic sequence may act as a template for this. The VPg-pUpU is then used as primer on the genomic RNA poly(A) by the RNA-dependent RNA polymerase to replicate the viral genome. During genome replication, the VPg-RNA linkage is removed by the host TDP2, thereby accelerating replication. During the late stage of the replication cycle, host TDP2 is excluded from sites of viral RNA synthesis and encapsidation, allowing for the generation of progeny virions. Its function is as follows. Involved in the viral replication complex and viral polypeptide maturation. It exhibits protease activity with a specificity and catalytic efficiency that is different from protease 3C. Protein 3CD lacks polymerase activity. Protein 3CD binds to the 5'UTR of the viral genome. In terms of biological role, replicates the viral genomic RNA on the surface of intracellular membranes. May form linear arrays of subunits that propagate along a strong head-to-tail interaction called interface-I. Covalently attaches UMP to a tyrosine of VPg, which is used to prime RNA synthesis. The positive stranded RNA genome is first replicated at virus induced membranous vesicles, creating a dsRNA genomic replication form. This dsRNA is then used as template to synthesize positive stranded RNA genomes. ss(+)RNA genomes are either translated, replicated or encapsidated. Major viral protease that mediates proteolytic processing of the polyprotein. Cleaves host EIF5B, contributing to host translation shutoff. Also cleaves host PABPC1, contributing to host translation shutoff. Cleaves host NLRP1, triggers host N-glycine-mediated degradation of the autoinhibitory NLRP1 N-terminal fragment. The chain is Genome polyprotein from Homo sapiens (Human).